The sequence spans 249 residues: Small ribosomal subunit protein uS2 (249 aa).

The protein belongs to the universal ribosomal protein uS2 family.

This chain is Small ribosomal subunit protein uS2, found in Chlorobaculum tepidum (strain ATCC 49652 / DSM 12025 / NBRC 103806 / TLS) (Chlorobium tepidum).